The chain runs to 584 residues: Kinesin-like protein KIN-10C (584 aa).

Positions 11-324 constitute a Kinesin motor domain; it reads PVRVVLRVRP…VSLAARSRHV (314 aa). 99 to 106 contributes to the ATP binding site; it reads GATGSGKT. Disordered stretches follow at residues 377 to 398 and 445 to 469; these read SMSHKKQSASGRVSGRGKAMDQ and DKTGSSLRKALSPISSNMDPQKQRT.

It belongs to the TRAFAC class myosin-kinesin ATPase superfamily. Kinesin family. KIN-10 subfamily.

The polypeptide is Kinesin-like protein KIN-10C (Oryza sativa subsp. japonica (Rice)).